The primary structure comprises 303 residues: Recombination-associated protein RdgC (303 aa).

The protein belongs to the RdgC family.

The protein localises to the cytoplasm. It is found in the nucleoid. Its function is as follows. May be involved in recombination. The chain is Recombination-associated protein RdgC from Shewanella sediminis (strain HAW-EB3).